A 712-amino-acid chain; its full sequence is Glucans biosynthesis glucosyltransferase H (712 aa).

6 helical membrane-spanning segments follow: residues 57–77 (LAIM…MYQV), 89–109 (IVLA…VSAL), 408–428 (GIGS…GILI), 462–482 (FAGT…LVVI), 552–572 (YAAP…VSWP), and 573–593 (LLLW…VALL).

It belongs to the glycosyltransferase 2 family. OpgH subfamily.

The protein localises to the cell inner membrane. Its pathway is glycan metabolism; osmoregulated periplasmic glucan (OPG) biosynthesis. Involved in the biosynthesis of osmoregulated periplasmic glucans (OPGs). This is Glucans biosynthesis glucosyltransferase H from Rhodopseudomonas palustris (strain BisA53).